Consider the following 305-residue polypeptide: Porphobilinogen deaminase (305 aa).

Cys-240 is modified (S-(dipyrrolylmethanemethyl)cysteine).

It belongs to the HMBS family. In terms of assembly, monomer. The cofactor is dipyrromethane.

It catalyses the reaction 4 porphobilinogen + H2O = hydroxymethylbilane + 4 NH4(+). The protein operates within porphyrin-containing compound metabolism; protoporphyrin-IX biosynthesis; coproporphyrinogen-III from 5-aminolevulinate: step 2/4. Functionally, tetrapolymerization of the monopyrrole PBG into the hydroxymethylbilane pre-uroporphyrinogen in several discrete steps. The polypeptide is Porphobilinogen deaminase (Xylella fastidiosa (strain M23)).